A 208-amino-acid polypeptide reads, in one-letter code: Uracil phosphoribosyltransferase (208 aa).

5-phospho-alpha-D-ribose 1-diphosphate-binding positions include arginine 78, arginine 103, and 130–138; that span reads DPMLATGGS. Uracil contacts are provided by residues isoleucine 193 and 198-200; that span reads GDA. 5-phospho-alpha-D-ribose 1-diphosphate is bound at residue aspartate 199.

Belongs to the UPRTase family. Mg(2+) is required as a cofactor.

The catalysed reaction is UMP + diphosphate = 5-phospho-alpha-D-ribose 1-diphosphate + uracil. Its pathway is pyrimidine metabolism; UMP biosynthesis via salvage pathway; UMP from uracil: step 1/1. Its activity is regulated as follows. Allosterically activated by GTP. Catalyzes the conversion of uracil and 5-phospho-alpha-D-ribose 1-diphosphate (PRPP) to UMP and diphosphate. The polypeptide is Uracil phosphoribosyltransferase (Neisseria meningitidis serogroup A / serotype 4A (strain DSM 15465 / Z2491)).